Here is a 188-residue protein sequence, read N- to C-terminus: PRA1 family protein 3 (188 aa).

At M1 the chain carries N-acetylmethionine. Over M1–R35 the chain is Cytoplasmic. Helical transmembrane passes span V36–S56 and V57–F77. Topologically, residues T78–R92 are cytoplasmic. 2 consecutive transmembrane segments (helical) span residues M93–I113 and M115–I135. The tract at residues M103 to G117 is required for homodimer formation and heterodimer formation with ARL6IP1. Residues H136–E188 lie on the Cytoplasmic side of the membrane. A targeting to endoplasmic reticulum membrane region spans residues H136–E188.

It belongs to the PRA1 family. As to quaternary structure, homodimer. Heterodimer with ARL6IP1. Forms multimers. Interacts with ARL6. Interacts with prenylated RAB1A and RAB3A. Interacts with SLC1A1/EAAC1. Interacts with RTN2 (via first transmembrane domain). Does not interact with VAMP1, VAMP2 or VAMP3. Ubiquitous. Most abundant in heart and brain. In the embryonic brain cortex, expressed in neurons and astrocytes.

The protein localises to the endoplasmic reticulum membrane. Its subcellular location is the cell membrane. It localises to the cytoplasm. The protein resides in the cytoskeleton. Its function is as follows. Regulates intracellular concentrations of taurine and glutamate. Negatively modulates SLC1A1/EAAC1 glutamate transport activity by decreasing its affinity for glutamate in a PKC activity-dependent manner. Plays a role in the retention of SLC1A1/EAAC1 in the endoplasmic reticulum. The chain is PRA1 family protein 3 (Arl6ip5) from Rattus norvegicus (Rat).